The sequence spans 369 residues: Outer membrane porin F (369 aa).

Positions methionine 1–alanine 21 are cleaved as a signal peptide. Residues alanine 22–lysine 27 traverse the membrane as a beta stranded segment. Residue aspartate 28 is a topological domain, periplasmic. The chain crosses the membrane as a beta stranded span at residues glycine 29 to phenylalanine 44. The Extracellular segment spans residues alanine 45–aspartate 55. Residues serine 56–isoleucine 68 form a beta stranded membrane-spanning segment. The Periplasmic segment spans residues serine 69 to aspartate 70. A beta stranded membrane pass occupies residues glutamine 71–lysine 83. Over alanine 84–arginine 97 the chain is Extracellular. A beta stranded membrane pass occupies residues leucine 98 to alanine 106. The Periplasmic segment spans residues asparagine 107–tyrosine 108. Residues glycine 109–arginine 115 traverse the membrane as a beta stranded segment. At asparagine 116–threonine 150 the chain is on the extracellular side. The chain crosses the membrane as a beta stranded span at residues glycine 151–asparagine 157. At threonine 158 to aspartate 165 the chain is on the periplasmic side. The chain crosses the membrane as a beta stranded span at residues glycine 166–asparagine 177. The Extracellular portion of the chain corresponds to serine 178 to glycine 193. A beta stranded transmembrane segment spans residues aspartate 194 to valine 204. At glycine 205 to tyrosine 206 the chain is on the periplasmic side. A beta stranded membrane pass occupies residues glycine 207–arginine 219. Residues threonine 220–arginine 234 are Extracellular-facing. The beta stranded transmembrane segment at alanine 235 to alanine 246 threads the bilayer. Position 247 (asparagine 247) is a topological domain, periplasmic. A beta stranded membrane pass occupies residues asparagine 248–arginine 259. Topologically, residues asparagine 260–asparagine 278 are extracellular. Residues lysine 279–phenylalanine 291 form a beta stranded membrane-spanning segment. Residues serine 292–leucine 294 are Periplasmic-facing. Residues glycine 295–lysine 308 form a beta stranded membrane-spanning segment. Topologically, residues aspartate 309 to leucine 320 are extracellular. Residues valine 321 to phenylalanine 332 form a beta stranded membrane-spanning segment. The Periplasmic portion of the chain corresponds to asparagine 333–lysine 334. The chain crosses the membrane as a beta stranded span at residues asparagine 335 to isoleucine 344. Topologically, residues asparagine 345–asparagine 359 are extracellular. The chain crosses the membrane as a beta stranded span at residues valine 360–phenylalanine 369.

It belongs to the Gram-negative porin family. Homotrimer.

The protein resides in the cell outer membrane. Its function is as follows. Forms pores that allow passive diffusion of small molecules across the outer membrane. The protein is Outer membrane porin F (ompF) of Xenorhabdus nematophila (strain ATCC 19061 / DSM 3370 / CCUG 14189 / LMG 1036 / NCIMB 9965 / AN6).